The primary structure comprises 298 residues: Epimerase family protein SSP1921 (298 aa).

The protein belongs to the NAD(P)-dependent epimerase/dehydratase family. SDR39U1 subfamily.

This Staphylococcus saprophyticus subsp. saprophyticus (strain ATCC 15305 / DSM 20229 / NCIMB 8711 / NCTC 7292 / S-41) protein is Epimerase family protein SSP1921.